The following is a 161-amino-acid chain: Regulator of ribonuclease activity A (161 aa).

Belongs to the RraA family. In terms of assembly, homotrimer. Binds to both RNA-binding sites in the C-terminal region of Rne and to RhlB.

The protein localises to the cytoplasm. Globally modulates RNA abundance by binding to RNase E (Rne) and regulating its endonucleolytic activity. Can modulate Rne action in a substrate-dependent manner by altering the composition of the degradosome. Modulates RNA-binding and helicase activities of the degradosome. The protein is Regulator of ribonuclease activity A of Tolumonas auensis (strain DSM 9187 / NBRC 110442 / TA 4).